We begin with the raw amino-acid sequence, 46 residues long: Iota-conotoxin-like r11b (46 aa).

2 positions are modified to 4-hydroxyproline: Pro2 and Pro11. 4 cysteine pairs are disulfide-bonded: Cys5–Cys19, Cys12–Cys22, Cys18–Cys27, and Cys21–Cys38. Pro29 carries the 4-hydroxyproline modification. Position 44 is a D-phenylalanine (Phe44).

Post-translationally, the natural D-Phe form of the peptide is more potent than the synthetic L-Phe form. In terms of tissue distribution, expressed by the venom duct.

Its subcellular location is the secreted. Functionally, iota-conotoxins bind to voltage-gated sodium channels (Nav) and act as agonists by shifting the voltage-dependence of activation to more hyperpolarized levels. Produces excitatory symptoms when injected intracranially into mice and is lethal at higher doses. Exposure to frog cutaneous pectoris induces spontaneous and repetitive action potentials. This effect is slowly reversible. Natural peptide (with D-Phe) is active on nerve, but not on muscle. Synthetic peptide (with L-Phe) is not active on both nerve and muscle. The protein is Iota-conotoxin-like r11b of Conus radiatus (Rayed cone).